The following is a 202-amino-acid chain: Holliday junction branch migration complex subunit RuvA (202 aa).

The tract at residues 1–64 is domain I; it reads MIGRLSGTLL…EDAHLLFGFA (64 aa). Residues 65–143 form a domain II region; sequence GRAERELFRQ…SLPSADLLSP (79 aa). A flexible linker region spans residues 144–152; it reads APAAGAALL. The domain III stretch occupies residues 153–202; that stretch reads VENDERADISQALQALGYSAREAEAALKSVPDGTDVATGIRLALKALARP.

The protein belongs to the RuvA family. As to quaternary structure, homotetramer. Forms an RuvA(8)-RuvB(12)-Holliday junction (HJ) complex. HJ DNA is sandwiched between 2 RuvA tetramers; dsDNA enters through RuvA and exits via RuvB. An RuvB hexamer assembles on each DNA strand where it exits the tetramer. Each RuvB hexamer is contacted by two RuvA subunits (via domain III) on 2 adjacent RuvB subunits; this complex drives branch migration. In the full resolvosome a probable DNA-RuvA(4)-RuvB(12)-RuvC(2) complex forms which resolves the HJ.

Its subcellular location is the cytoplasm. Functionally, the RuvA-RuvB-RuvC complex processes Holliday junction (HJ) DNA during genetic recombination and DNA repair, while the RuvA-RuvB complex plays an important role in the rescue of blocked DNA replication forks via replication fork reversal (RFR). RuvA specifically binds to HJ cruciform DNA, conferring on it an open structure. The RuvB hexamer acts as an ATP-dependent pump, pulling dsDNA into and through the RuvAB complex. HJ branch migration allows RuvC to scan DNA until it finds its consensus sequence, where it cleaves and resolves the cruciform DNA. The protein is Holliday junction branch migration complex subunit RuvA of Laribacter hongkongensis (strain HLHK9).